The chain runs to 3788 residues: Lysosomal-trafficking regulator (3788 aa).

Disordered regions lie at residues 148–180 (KSTH…TVVS) and 198–217 (EGHL…VLSD). A Phosphoserine modification is found at S164. Phosphothreonine is present on T165. Residue S166 is modified to Phosphoserine. The stretch at 662–700 (GPTSGLPSPSYRFQGILPSSGSEDLLWKWDALEAYQSFV) is one WD 1 repeat. 3 disordered regions span residues 1169-1196 (LGPG…FSEE), 1213-1240 (GYEA…EAEG), and 1482-1519 (ESAA…TESI). Positions 1213–1232 (GYEADSESNPEDVDTQDDGV) are enriched in acidic residues. Phosphoserine is present on residues S1503 and S1504. One copy of the WD 2 repeat lies at 1576-1620 (SQENIFFPSKWQHLVLTYIQHPQGKKNVHGEISIWVSGQRKTDVI). Phosphoserine occurs at positions 2099, 2118, 2203, 2207, and 2254. Residues 2177–2221 (ANGVSRGSPRFPRARVDHKDVGTEPRSDDDSPGDESYPRRPDNLK) form a disordered region. Positions 2190 to 2205 (ARVDHKDVGTEPRSDD) are enriched in basic and acidic residues. Disordered stretches follow at residues 2556 to 2581 (HDSE…SIAG) and 2659 to 2681 (NTSQ…HHEQ). Residues 2566–2578 (SAHRHSVPPKRRS) are compositionally biased toward basic residues. The segment covering 2659-2671 (NTSQSKTSVSQTE) has biased composition (polar residues). One can recognise a BEACH-type PH domain in the interval 2996–3102 (AASESIRVNR…VRDDVYQSIL (107 aa)). The BEACH domain occupies 3126 to 3409 (QITNFEYLTH…QLFHTAHASR (284 aa)). WD repeat units lie at residues 3550–3589 (SQQH…STPS), 3601–3640 (GHTE…YVQS), 3643–3686 (GHKS…VGHV), 3687–3731 (HCRE…PVRE), and 3736–3775 (KSNK…RVKL).

Interacts with CPAP, LIP8 and ZNF521. As to expression, expressed in the heart, lung, liver, spleen, brain and in different immune cell types (purified B and T lymphocytes, bone marrow-derived macrophages and dendritic cells).

It localises to the cytoplasm. Adapter protein that regulates and/or fission of intracellular vesicles such as lysosomes. Might regulate trafficking of effectors involved in exocytosis. In cytotoxic T-cells and natural killer (NK) cells, has role in the regulation of size, number and exocytosis of lytic granules. In macrophages and dendritic cells, regulates phagosome maturation by controlling the conversion of early phagosomal compartments into late phagosomes. In macrophages and dendritic cells, specifically involved in TLR3- and TLR4-induced production of pro-inflammatory cytokines by regulating the endosomal TLR3- TICAM1/TRIF and TLR4- TICAM1/TRIF signaling pathways. In Mus musculus (Mouse), this protein is Lysosomal-trafficking regulator (Lyst).